The primary structure comprises 393 residues: Myb-related transcription factor, partner of profilin (393 aa).

A compositionally biased stretch (low complexity) spans 1-11 (MASATAAAAPG). Residues 1–21 (MASATAAAAPGEAEETTRLRK) are disordered. Residues 16 to 88 (TTRLRKPRFS…EVQKRWNDFK (73 aa)) form the Myb-like domain. The short motif at 87–90 (FKRR) is the Nuclear localization signal element. Disordered regions lie at residues 125 to 254 (GPGV…EQSL), 290 to 323 (PLLP…APKV), and 348 to 393 (IISP…WKSP). Positions 142–157 (AAASSQPQASTASTQR) are enriched in low complexity. Over residues 160-171 (LSEDRRQDRRAD) the composition is skewed to basic and acidic residues. Residues 173 to 184 (PAQSKGGSSSPE) show a composition bias toward polar residues. Composition is skewed to pro residues over residues 219–229 (PPLPAPPPPPT), 238–247 (SPSPTPPRPT), 296–320 (PADP…PPSA), and 359–368 (KPLPPAPPLP). Positions 375–393 (HKRRKGFPTRKRRGRWKSP) are enriched in basic residues. 2 consecutive short sequence motifs (nuclear localization signal) follow at residues 376–379 (KRRK) and 384–387 (RKRR).

In terms of assembly, interacts with PFN1. Homodimer and heterodimer with PFN1. As to expression, ubiquitous. Highly expressed in brain, liver and testis. Moderate expression in heart, lung and skeletal muscle. Low expression in spleen and kidney.

Its subcellular location is the nucleus. Its function is as follows. Transcriptional repressor; DNA-binding protein that specifically recognizes the core sequence 5'-YAAC[GT]G-3'. Dimerization with PFN1 reduces its DNA-binding capacity. The chain is Myb-related transcription factor, partner of profilin (Mypop) from Mus musculus (Mouse).